The primary structure comprises 461 residues: Cysteine--tRNA ligase (461 aa).

Position 28 (cysteine 28) interacts with Zn(2+). The 'HIGH' region motif lies at 30–40 (ITVYDLCHIGH). The Zn(2+) site is built by cysteine 209, histidine 234, and glutamate 238. The 'KMSKS' region motif lies at 266-270 (KMSKS). ATP is bound at residue lysine 269.

This sequence belongs to the class-I aminoacyl-tRNA synthetase family. Monomer. Requires Zn(2+) as cofactor.

The protein resides in the cytoplasm. It carries out the reaction tRNA(Cys) + L-cysteine + ATP = L-cysteinyl-tRNA(Cys) + AMP + diphosphate. In Escherichia fergusonii (strain ATCC 35469 / DSM 13698 / CCUG 18766 / IAM 14443 / JCM 21226 / LMG 7866 / NBRC 102419 / NCTC 12128 / CDC 0568-73), this protein is Cysteine--tRNA ligase.